A 217-amino-acid polypeptide reads, in one-letter code: MVYKIAIDGPAGSGKSTTACLLRKRLGYKTINSGSIYRAVAYVLDSTFKNADLESKNIRDFVNLLDFDMFKDEILYNNHNISNYLRSKRIDEYVSLVAKKLYIRKKVGNLQNKFIKCSDTGIIIEGRDIGTNVLPDATLKIYLDASPKVRAKRRFLERPDISYEDTLAGIIERDYSDKTREHGALVVAEGAIIINTDDMSTEEVVDKIFDLFQNKIN.

9 to 17 lines the ATP pocket; that stretch reads GPAGSGKST.

It belongs to the cytidylate kinase family. Type 1 subfamily.

The catalysed reaction is CMP + ATP = CDP + ADP. The enzyme catalyses dCMP + ATP = dCDP + ADP. This Vairimorpha ceranae (strain BRL01) (Microsporidian parasite) protein is Probable cytidylate kinase.